Reading from the N-terminus, the 822-residue chain is MPAPIRLRELIRTIRTARTQAEEREMIQKECAAIRSSFREEDNTYRCRNVAKLLYMHMLGYPAHFGQLECLKLIASQKFTDKRIGYLGAMLLLDERQDVHLLMTNCIKNDLNHSTQFVQGLALCTLGCMGSSEMCRDLAGEVEKLLKTSNSYLRKKAALCAVHVIRKVPELMEMFLPATKNLLNEKNHGVLHTSVVLLTEMCERSPDMLAHFRKLVPQLVRILKNLIMSGYSPEHDVSGISDPFLQVRILRLLRILGRNDDDSSEAMNDILAQVATNTETSKNVGNAILYETVLTIMDIKSESGLRVLAINILGRFLLNNDKNIRYVALTSLLKTVQTDHNAVQRHRSTIVDCLKDLDVSIKRRAMELSFALVNGNNIRGMMKELLYFLDSCEPEFKADCASGIFLAAEKYAPSKRWHIDTIMRVLTTAGSYVRDDAVPNLIQLITNSVEMHAYTVQRLYKAILGDYSQQPLVQVAAWCIGEYGDLLVSGQCEEEEPIQVTEDEVLDILESVLISNMSTSVTRGYALTAIMKLSTRFTCTVNRIKKVVSIYGSSIDVELQQRAVEYNALFKKYDHMRSALLERMPVMEKVTTNGPSEIVQTNGETEPAPLETKPPPSGPQPTSQANDLLDLLGGNDITPVIPTAPTSKPASAGGELLDLLGDITLTGAPAAAPTPASVPQISQPPFLLDGLSSQPLFNDIAPGIPSITAYSKNGLKIEFTFERSNTNPSVTVITIQASNSTELDMTDFVFQAAVPKTFQLQLLSPSSSVVPAFNTGTITQVIKVLNPQKQQLRMRIKLTYNHKGSAMQDLAEVNNFPPQSWQ.

Residues 593–604 (NGPSEIVQTNGE) are compositionally biased toward polar residues. Residues 593 to 627 (NGPSEIVQTNGETEPAPLETKPPPSGPQPTSQAND) are disordered. Residues 702 to 817 (PGIPSITAYS…QDLAEVNNFP (116 aa)) enclose the GAE domain.

This sequence belongs to the adaptor complexes large subunit family. In terms of assembly, adaptor protein complex 1 (AP-1) is a heterotetramer composed of two large adaptins (gamma-type subunit AP1G1 and beta-type subunit AP1B1), a medium adaptin (mu-type subunit AP1M1 or AP1M2) and a small adaptin (sigma-type subunit AP1S1 or AP1S2 or AP1S3). Interacts (via GAE domain) with RABEP1. Interacts with EPS15. Interacts with SYNRG/gamma-synergin. Interacts (via GAE domain) with AP1AR (via coiled-coil domain). Interacts with CLN3 (via dileucine motif); this interaction facilitates lysosomal targeting. Interacts (via GAE domain) with AFTPH/aftiphilin; the interaction is required to recruit AFTPH/aftiphilin to the perinuclear region of the cell. Widely expressed.

The protein resides in the golgi apparatus. The protein localises to the cytoplasmic vesicle. It is found in the clathrin-coated vesicle membrane. It localises to the cytoplasm. Its subcellular location is the perinuclear region. The protein resides in the clathrin-coated vesicle. The protein localises to the membrane. It is found in the clathrin-coated pit. Functionally, subunit of clathrin-associated adaptor protein complex 1 that plays a role in protein sorting in the late-Golgi/trans-Golgi network (TGN) and/or endosomes. The AP complexes mediate both the recruitment of clathrin to membranes and the recognition of sorting signals within the cytosolic tails of transmembrane cargo molecules. In association with AFTPH/aftiphilin in the aftiphilin/p200/gamma-synergin complex, involved in the trafficking of transferrin from early to recycling endosomes, and the membrane trafficking of furin and the lysosomal enzyme cathepsin D between the trans-Golgi network (TGN) and endosomes. The sequence is that of AP-1 complex subunit gamma-1 (Ap1g1) from Mus musculus (Mouse).